Here is a 126-residue protein sequence, read N- to C-terminus: RuBisCO chaperone RbcX (126 aa).

Belongs to the RbcX family. In terms of assembly, homodimer. Interacts with the exposed C-terminal peptide of RbcL via its central cleft, contacts a second RbcL monomer via its peripheral polar surface.

Its subcellular location is the carboxysome. The protein localises to the cytoplasm. An RbcL-specific chaperone. Required for assembly of the RbcL8 core. The central cleft of the RbcX homodimer (RbcX2) binds the C-terminus of a RbcL monomer, stabilizing the C-terminus and probably preventing its reassociation with chaperonin GroEL-ES. At the same time the peripheral region of RbcX2 binds a second RbcL monomer, bridging the RbcL homodimers in the correct orientation. The RbcX2(2)-bound RbcL dimers then assemble into the RbcL8 core (RbcL8-(RbcX2)8). RbcS binding triggers the release of RbcX2. This is RuBisCO chaperone RbcX from Thermosynechococcus vestitus (strain NIES-2133 / IAM M-273 / BP-1).